A 639-amino-acid chain; its full sequence is Threonine--tRNA ligase (639 aa).

The 61-residue stretch at 1 to 61 (MIHITLPDGS…TADCRLSIIT (61 aa)) folds into the TGS domain. Residues 242–533 (DHRKLGRELD…LLEQHAGALP (292 aa)) form a catalytic region. Zn(2+)-binding residues include Cys-333, His-384, and His-510.

This sequence belongs to the class-II aminoacyl-tRNA synthetase family. In terms of assembly, homodimer. Zn(2+) is required as a cofactor.

It localises to the cytoplasm. It carries out the reaction tRNA(Thr) + L-threonine + ATP = L-threonyl-tRNA(Thr) + AMP + diphosphate + H(+). Its function is as follows. Catalyzes the attachment of threonine to tRNA(Thr) in a two-step reaction: L-threonine is first activated by ATP to form Thr-AMP and then transferred to the acceptor end of tRNA(Thr). Also edits incorrectly charged L-seryl-tRNA(Thr). The polypeptide is Threonine--tRNA ligase (Verminephrobacter eiseniae (strain EF01-2)).